The sequence spans 191 residues: Fe/S biogenesis protein NfuA (191 aa).

Residues C149 and C152 each coordinate [4Fe-4S] cluster.

This sequence belongs to the NfuA family. Homodimer. Requires [4Fe-4S] cluster as cofactor.

Involved in iron-sulfur cluster biogenesis. Binds a 4Fe-4S cluster, can transfer this cluster to apoproteins, and thereby intervenes in the maturation of Fe/S proteins. Could also act as a scaffold/chaperone for damaged Fe/S proteins. The protein is Fe/S biogenesis protein NfuA of Serratia proteamaculans (strain 568).